The primary structure comprises 225 residues: Uracil-DNA glycosylase (225 aa).

Asp-65 acts as the Proton acceptor in catalysis.

The protein belongs to the uracil-DNA glycosylase (UDG) superfamily. UNG family.

Its subcellular location is the cytoplasm. The catalysed reaction is Hydrolyzes single-stranded DNA or mismatched double-stranded DNA and polynucleotides, releasing free uracil.. Its function is as follows. Excises uracil residues from the DNA which can arise as a result of misincorporation of dUMP residues by DNA polymerase or due to deamination of cytosine. This Bacillus mycoides (strain KBAB4) (Bacillus weihenstephanensis) protein is Uracil-DNA glycosylase.